A 367-amino-acid polypeptide reads, in one-letter code: MSIIAKTVFIGLSGGVDSAVSALLLKKQYQEVIGVFMECWDETLNNDFYGHKKINNNKSGCSSFQDFQQAKKIANSLGIKLIKKNLIEAYWNKVFLPMIQSFKKGLTPNPDIWCNRFIKFGLLHDFCKQINPNSLFATGHYAKINMIENQPLLSIPKDTNKDQTYFLANVKKEQFQNVIFPLADLKKITVRNIARENNWEVADKKDSTGICFIGERHFSDFLKNYLPVKKGLIKDWKTKQTISEHDGVWFYTIGQRSGLNLGGLKQRHFVVAKDIETNELFVSCDKEELLKTTILLDQFNWLYTPKQLPSQVLVRIRHAQKPEIAKLKLLSDNKLEITFKNPVISVASGQFGVLYTLDQICLGAGLI.

Residues G11 to S18 and M37 each bind ATP. Positions N109–D111 are interaction with target base in tRNA. C114 (nucleophile) is an active-site residue. Cysteines 114 and 211 form a disulfide. Position 139 (G139) interacts with ATP. Residues K161–Q163 form an interaction with tRNA region. The Cysteine persulfide intermediate role is filled by C211.

The protein belongs to the MnmA/TRMU family.

It localises to the cytoplasm. The catalysed reaction is S-sulfanyl-L-cysteinyl-[protein] + uridine(34) in tRNA + AH2 + ATP = 2-thiouridine(34) in tRNA + L-cysteinyl-[protein] + A + AMP + diphosphate + H(+). Functionally, catalyzes the 2-thiolation of uridine at the wobble position (U34) of tRNA, leading to the formation of s(2)U34. The sequence is that of tRNA-specific 2-thiouridylase MnmA from Mycoplasma genitalium (strain ATCC 33530 / DSM 19775 / NCTC 10195 / G37) (Mycoplasmoides genitalium).